A 187-amino-acid polypeptide reads, in one-letter code: ECF RNA polymerase sigma factor SigK (187 aa).

The sigma-70 factor domain-2 stretch occupies residues 30–96 (YDHTCTRVYG…RAVDRVRAEQ (67 aa)). Residues 53-56 (ETTQ) carry the Interaction with polymerase core subunit RpoC motif. The tract at residues 133–182 (CLDGLTDTQRQCIELAYYGGLTYAEVSQRLATNLSTIKSRMRDALRGLRN) is sigma-70 factor domain-4. Positions 155 to 174 (YAEVSQRLATNLSTIKSRMR) form a DNA-binding region, H-T-H motif.

This sequence belongs to the sigma-70 factor family. ECF subfamily. Interacts transiently with the RNA polymerase catalytic core formed by RpoA, RpoB, RpoC and RpoZ (2 alpha, 1 beta, 1 beta' and 1 omega subunit) to form the RNA polymerase holoenzyme that can initiate transcription. Interacts (via sigma-70 factor domain 4) with anti-sigma-K factor RskA.

In terms of biological role, sigma factors are initiation factors that promote the attachment of RNA polymerase to specific initiation sites and are then released. Extracytoplasmic function (ECF) sigma factors are held in an inactive form by an anti-sigma factor until released by regulated intramembrane proteolysis. This chain is ECF RNA polymerase sigma factor SigK (sigK), found in Mycobacterium ulcerans (strain Agy99).